Consider the following 158-residue polypeptide: Osmosensory protein A (158 aa).

Residue Thr2 is modified to Phosphothreonine; by PknD. The STAS domain maps to 28–139 (AQIRAYLHHL…RSVHKALHDL (112 aa)).

The protein belongs to the anti-sigma-factor antagonist family. In terms of assembly, interacts with Rv2638. Phosphorylation abolishes binding to Rv2638. Phosphorylated on Thr-2 by the serine/threonine-protein kinase PknD. Also phosphorylated to a lesser extent by PknB and PknE. Dephosphorylated by PstP.

Regulated by PknD under osmotic stress. In terms of biological role, part of a signaling pathway that enables adaptation to osmotic stress through cell wall remodeling and virulence factor production. Unphosphorylated OprA forms a complex with the anti-anti-sigma-factor paralog Rv2638 that dissociates on OprA phosphorylation by PknD. Phosphorylation of OprA may stimulate the release of SigF from an inhibitory complex and enable the transcription of osmotically regulated genes, such as oprA and the ESX-1-associated virulence factor espA. The protein is Osmosensory protein A of Mycobacterium tuberculosis (strain ATCC 25618 / H37Rv).